Here is a 277-residue protein sequence, read N- to C-terminus: Ribosomal RNA small subunit methyltransferase A (277 aa).

S-adenosyl-L-methionine contacts are provided by asparagine 23, leucine 25, glycine 50, glutamate 75, aspartate 98, and asparagine 121.

The protein belongs to the class I-like SAM-binding methyltransferase superfamily. rRNA adenine N(6)-methyltransferase family. RsmA subfamily.

The protein localises to the cytoplasm. It catalyses the reaction adenosine(1518)/adenosine(1519) in 16S rRNA + 4 S-adenosyl-L-methionine = N(6)-dimethyladenosine(1518)/N(6)-dimethyladenosine(1519) in 16S rRNA + 4 S-adenosyl-L-homocysteine + 4 H(+). Specifically dimethylates two adjacent adenosines (A1518 and A1519) in the loop of a conserved hairpin near the 3'-end of 16S rRNA in the 30S particle. May play a critical role in biogenesis of 30S subunits. The polypeptide is Ribosomal RNA small subunit methyltransferase A (Paraburkholderia xenovorans (strain LB400)).